The primary structure comprises 945 residues: Leucine--tRNA ligase (945 aa).

The 'HIGH' region motif lies at 43 to 53 (PYPNGAIHIGH). A 'KMSKS' region motif is present at residues 638–642 (KMSKS). Residue Lys-641 participates in ATP binding.

The protein belongs to the class-I aminoacyl-tRNA synthetase family.

Its subcellular location is the cytoplasm. The catalysed reaction is tRNA(Leu) + L-leucine + ATP = L-leucyl-tRNA(Leu) + AMP + diphosphate. The protein is Leucine--tRNA ligase of Pyrobaculum aerophilum (strain ATCC 51768 / DSM 7523 / JCM 9630 / CIP 104966 / NBRC 100827 / IM2).